Here is an 865-residue protein sequence, read N- to C-terminus: DNA mismatch repair protein MutS (865 aa).

Residue 609–616 participates in ATP binding; that stretch reads GPNMAGKS.

This sequence belongs to the DNA mismatch repair MutS family.

This protein is involved in the repair of mismatches in DNA. It is possible that it carries out the mismatch recognition step. This protein has a weak ATPase activity. In Leuconostoc citreum (strain KM20), this protein is DNA mismatch repair protein MutS.